The chain runs to 644 residues: 1-deoxy-D-xylulose-5-phosphate synthase (644 aa).

Thiamine diphosphate-binding positions include His78 and 120-122 (GHA). A Mg(2+)-binding site is contributed by Asp149. Residues 150-151 (AA), Asn178, and Glu373 contribute to the thiamine diphosphate site. Mg(2+) is bound at residue Asn178.

The protein belongs to the transketolase family. DXPS subfamily. Homodimer. Requires Mg(2+) as cofactor. The cofactor is thiamine diphosphate.

The catalysed reaction is D-glyceraldehyde 3-phosphate + pyruvate + H(+) = 1-deoxy-D-xylulose 5-phosphate + CO2. The protein operates within metabolic intermediate biosynthesis; 1-deoxy-D-xylulose 5-phosphate biosynthesis; 1-deoxy-D-xylulose 5-phosphate from D-glyceraldehyde 3-phosphate and pyruvate: step 1/1. In terms of biological role, catalyzes the acyloin condensation reaction between C atoms 2 and 3 of pyruvate and glyceraldehyde 3-phosphate to yield 1-deoxy-D-xylulose-5-phosphate (DXP). The polypeptide is 1-deoxy-D-xylulose-5-phosphate synthase (Chlamydia felis (strain Fe/C-56) (Chlamydophila felis)).